The sequence spans 506 residues: L-amino-acid oxidase (506 aa).

The first 18 residues, 1–18, serve as a signal peptide directing secretion; it reads MNVFFTFSLLFLAALGSC. Cysteines 28 and 191 form a disulfide. Glu36 is a binding site for Zn(2+). Residues 61–62, Ser62, 81–82, Arg89, and 105–108 contribute to the FAD site; these read MS, EA, and GPMR. Arg108 lines the substrate pocket. 3 residues coordinate Zn(2+): Glu111, Glu118, and Glu150. Asn190 carries N-linked (GlcNAc...) asparagine glycosylation. Asp219 contributes to the Zn(2+) binding site. Position 241 (His241) interacts with substrate. Residue Glu248 participates in Zn(2+) binding. An FAD-binding site is contributed by Val279. Zn(2+)-binding residues include Glu299 and His332. A disulfide bridge connects residues Cys349 and Cys430. Tyr390 is a substrate binding site. His458 is a binding site for Zn(2+). FAD is bound by residues Glu475 and 482–487; that span reads GWIDST. Position 482-483 (482-483) interacts with substrate; it reads GW.

The protein belongs to the flavin monoamine oxidase family. FIG1 subfamily. Homodimer; non-covalently linked. Stabilized by a single zinc-binding site located at the dimer interface (Asp-219, His-332 and His-458). Other zinc-bind sites can be understood as transient and non-specific, and appear due to the high concentration of zinc ions used in the crystallization experiments. The cofactor is FAD. In terms of tissue distribution, expressed by the venom gland.

It is found in the secreted. The catalysed reaction is an L-alpha-amino acid + O2 + H2O = a 2-oxocarboxylate + H2O2 + NH4(+). The enzyme catalyses L-leucine + O2 + H2O = 4-methyl-2-oxopentanoate + H2O2 + NH4(+). It catalyses the reaction L-phenylalanine + O2 + H2O = 3-phenylpyruvate + H2O2 + NH4(+). It carries out the reaction L-tryptophan + O2 + H2O = indole-3-pyruvate + H2O2 + NH4(+). The catalysed reaction is L-methionine + O2 + H2O = 4-methylsulfanyl-2-oxobutanoate + H2O2 + NH4(+). The enzyme catalyses L-isoleucine + O2 + H2O = (S)-3-methyl-2-oxopentanoate + H2O2 + NH4(+). It catalyses the reaction L-tyrosine + O2 + H2O = 3-(4-hydroxyphenyl)pyruvate + H2O2 + NH4(+). Its function is as follows. Catalyzes an oxidative deamination of predominantly hydrophobic and aromatic L-amino acids, thus producing hydrogen peroxide that may contribute to the diverse toxic effects of this enzyme. Shows high catalytic activity against L-Met, L-Leu, L-Phe, L-Trp, L-Tyr, L-Ile. Shows no or weak activity on L-Cys, L-Val, L-Gln, L-Thr, L-Ser, L-Lys, L-Arg, L-Asn, L-Glu, L-Gly, L-Pro, L-Asp and L-His. Induces platelet aggregation in platelet-rich plasma, probably due to hydrogen peroxide production, since catalase inhibits aggregation effect. Induces moderate mouse paw edema. Induces apoptosis and shows cytotoxicity against several cancer cell lines, which is inhibited by catalase. Shows hemolytic activity and antibacterial activities against both Gram-positive and Gram-negative bacteria. Has parasiticidal activities against both trypanosomes and leishmania, as a result of enzyme-catalyzed hydrogen peroxide production. Unlike other snake venom L-amino acid oxidases, does not induce hemorrhage (with 50 ug of enzyme). This Bothrops atrox (Barba amarilla) protein is L-amino-acid oxidase.